The primary structure comprises 460 residues: tRNA modification GTPase MnmE (460 aa).

Arginine 22, glutamate 87, and arginine 126 together coordinate (6S)-5-formyl-5,6,7,8-tetrahydrofolate. The 160-residue stretch at 222-381 (GLKTAIIGKP…LENTIYNLVF (160 aa)) folds into the TrmE-type G domain. Asparagine 232 contributes to the K(+) binding site. GTP is bound by residues 232–237 (NVGKSS), 251–257 (TDIPGTT), and 276–279 (DTAG). Serine 236 contacts Mg(2+). Threonine 251, isoleucine 253, and threonine 256 together coordinate K(+). Residue threonine 257 coordinates Mg(2+). Lysine 460 is a binding site for (6S)-5-formyl-5,6,7,8-tetrahydrofolate.

This sequence belongs to the TRAFAC class TrmE-Era-EngA-EngB-Septin-like GTPase superfamily. TrmE GTPase family. In terms of assembly, homodimer. Heterotetramer of two MnmE and two MnmG subunits. The cofactor is K(+).

The protein localises to the cytoplasm. Functionally, exhibits a very high intrinsic GTPase hydrolysis rate. Involved in the addition of a carboxymethylaminomethyl (cmnm) group at the wobble position (U34) of certain tRNAs, forming tRNA-cmnm(5)s(2)U34. The protein is tRNA modification GTPase MnmE of Thermoanaerobacter pseudethanolicus (strain ATCC 33223 / 39E) (Clostridium thermohydrosulfuricum).